The following is a 452-amino-acid chain: Exodeoxyribonuclease 7 large subunit (452 aa).

Belongs to the XseA family. In terms of assembly, heterooligomer composed of large and small subunits.

The protein resides in the cytoplasm. It carries out the reaction Exonucleolytic cleavage in either 5'- to 3'- or 3'- to 5'-direction to yield nucleoside 5'-phosphates.. In terms of biological role, bidirectionally degrades single-stranded DNA into large acid-insoluble oligonucleotides, which are then degraded further into small acid-soluble oligonucleotides. This Bacillus anthracis (strain A0248) protein is Exodeoxyribonuclease 7 large subunit.